We begin with the raw amino-acid sequence, 467 residues long: ATP synthase subunit beta, sodium ion specific (467 aa).

151–158 (GGAGVGKT) is an ATP binding site.

It belongs to the ATPase alpha/beta chains family. As to quaternary structure, F-type ATPases have 2 components, CF(1) - the catalytic core - and CF(0) - the membrane proton channel. CF(1) has five subunits: alpha(3), beta(3), gamma(1), delta(1), epsilon(1). CF(0) has three main subunits: a, b and c.

The protein localises to the cell membrane. The catalysed reaction is 4 Na(+)(in) + ATP + H2O = 4 Na(+)(out) + ADP + phosphate + H(+). Produces ATP from ADP in the presence of a sodium ion gradient across the membrane. The beta chain is the catalytic subunit. In Propionigenium modestum, this protein is ATP synthase subunit beta, sodium ion specific.